Here is a 348-residue protein sequence, read N- to C-terminus: Protein RecA (348 aa).

65–72 (GPESSGKT) contacts ATP.

This sequence belongs to the RecA family.

Its subcellular location is the cytoplasm. Functionally, can catalyze the hydrolysis of ATP in the presence of single-stranded DNA, the ATP-dependent uptake of single-stranded DNA by duplex DNA, and the ATP-dependent hybridization of homologous single-stranded DNAs. It interacts with LexA causing its activation and leading to its autocatalytic cleavage. This is Protein RecA from Enterococcus gallinarum.